Consider the following 495-residue polypeptide: Cytochrome P450 monooxygenase FrzC (495 aa).

Residues 8 to 28 (GLVVGLWVTYHILLGTYNVFF) form a helical membrane-spanning segment. C437 serves as a coordination point for heme.

It belongs to the cytochrome P450 family. Heme is required as a cofactor.

Its subcellular location is the membrane. The catalysed reaction is (S,S)-2,5-di-(p-hydroxybenzyl)piperazine + reduced [NADPH--hemoprotein reductase] + O2 = (1S,4S)-4-[(4-hydroxyphenyl)methyl]-2,5-diazaspiro[bicyclo[3.2.1]octane-6,1'-cyclohexane]-2',5'-dien-4'-one + oxidized [NADPH--hemoprotein reductase] + 2 H2O + H(+). The protein operates within secondary metabolite biosynthesis. In terms of biological role, cytochrome P450 monooxygenase; part of the gene cluster that mediates the biosynthesis of the alkaloid (-)-FR901483, a potent immunosuppressant that shows efficacy in animal models and a probable inhibitor of purine nucleotide biosynthesis by targeting phosphoribosylpyrophosphate amidotransferase (PPAT). Within the pathway, FrzC catalyzes the coupling between N10 and C1' to produce a 1,4-diazabicyclo[3.2.1]octane spiro-fused to a 2,5-cyclohexadienone. FrzC probably first catalyzes homolysis of the N-H bond to generate the N10 radical which is followed by an O-H abstraction to give the phenolic radical which can be delocalized to C1'. Radical coupling between N10 and C1' then forms. The biosynthesis of (-)-FR901483 starts with the condensation of two L-tyrosines to yield (S,S)-dityrosyl-piperazine. This process occurs in 3 steps with the non-canonical nonribosomal peptide synthetase FrzA catalyzing the reduction of L-tyrosine into L-tyrosinal, the spontaneous condensation of 2 L-tyrosinal units, and the subsequent reduction by the NmrA-like family domain-containing oxidoreductase FrzB. The cytochrome P450 monooxygenase FrzC then performs coupling between N10 and C1' to morph the piperazine into a 1,4-diazabicyclo[3.2.1]octane spiro-fused to a 2,5-cyclohexadienone. The dienone portion is further reduced to cyclohexanone by the flavin-dependent reductase FrzD. The methyltranserases (MTs) FrzE and FrzF are then involved in the methylation at the C10' amine and the C4 phenolic oxygen, respectively. The order of the two MTs appear to be interchangeable. Cleavage of the C9-N10' bond by the dioxygenase FrzG then leads to formation of a conjugated iminium. In addition to the oxidation of C9, an additional dehydrogenation between C7 and C8 can occur to give a likely shunt product. The next biosynthetic step is the intramolecular aldol condensation catalyzed by the newly identified aldolase FrzH to yield an aza-tricyclic product with the formation of a C9-C3' bond. The short-chain dehydrogenase/reductase FrzI then produces dephospho-(-)-FR901483 that is phosphorylated at C4'-OH into (-)-FR901483 by the phosphotransferase FrzJ. The protein is Cytochrome P450 monooxygenase FrzC of Cladobotryum sp.